A 228-amino-acid chain; its full sequence is Extracellular protease inhibitor 10 (228 aa).

The first 22 residues, 1-22 (MKSAFTLSLALVAVTATISAAA), serve as a signal peptide directing secretion. Kazal-like domains follow at residues 23 to 72 (DDNC…ECAS), 90 to 127 (TSGT…AKCK), and 156 to 208 (GYQG…EGTL). Asparagine 25 is a glycosylation site (N-linked (GlcNAc...) asparagine). Cystine bridges form between cysteine 26–cysteine 56, cysteine 30–cysteine 49, and cysteine 38–cysteine 70. The disordered stretch occupies residues 69-92 (ECASTPASSATPSPVTSSTGSTSG). A compositionally biased stretch (low complexity) spans 71–92 (ASTPASSATPSPVTSSTGSTSG). 4 disulfides stabilise this stretch: cysteine 96/cysteine 126, cysteine 100/cysteine 119, cysteine 162/cysteine 193, and cysteine 167/cysteine 186. Asparagine 199 carries an N-linked (GlcNAc...) asparagine glycan.

Interacts with host subtilisin-like protease P69B.

It is found in the secreted. Functionally, secreted effector that interacts with and inhibits the pathogenesis-related P69B subtilisin-like serine protease of host tomato. Inhibition of host proteases by a pathogen extracellular protease inhibitor forms a specific type of defense-counterdefense mechanism between plants and microbial pathogens. The polypeptide is Extracellular protease inhibitor 10 (Phytophthora infestans (strain T30-4) (Potato late blight agent)).